Reading from the N-terminus, the 574-residue chain is Frizzled and smoothened-like protein G (574 aa).

An N-terminal signal peptide occupies residues 1–19 (MKSIIFITFFIFFLKKLNG). Residues 20–246 (LPNGYGVGLV…EKWNQIENLS (227 aa)) lie on the Extracellular side of the membrane. The region spanning 30-181 (DPNGQCMNYI…GLYEVPCFNP (152 aa)) is the FZ domain. 4 disulfide bridges follow: C35–C109, C48–C102, C91–C138, and C127–C178. N119, N161, N187, N206, N233, and N244 each carry an N-linked (GlcNAc...) asparagine glycan. The chain crosses the membrane as a helical span at residues 247-267 (KVLSTISFVCSIYNILSFGIL). Residues 268–273 (KKKKTK) lie on the Cytoplasmic side of the membrane. A helical transmembrane segment spans residues 274–294 (YTICISALSASVALINLGDII). Residues 295-324 (KIGVGYEKVLCPEPGRFATQVDDPLCGLTA) are Extracellular-facing. A helical transmembrane segment spans residues 325-345 (ALFHVGICSTVLWTTTMAIYL). Residues 346 to 358 (YSAIKNIKLFKFR) lie on the Cytoplasmic side of the membrane. Residues 359 to 379 (YFIIFNTGFSLTSLIIAASAS) traverse the membrane as a helical segment. Residues 380-401 (KFEAGTGSIECWIRDRWYSICL) are Extracellular-facing. Residues 402-422 (FWLPCGICLLIGTICIASVIV) traverse the membrane as a helical segment. Residues 423–445 (EIYKVSKNIKLSESETIMRQIKP) are Cytoplasmic-facing. The helical transmembrane segment at 446–466 (IISVILVSGSFTYLFIIFFDI) threads the bilayer. The Extracellular segment spans residues 467–502 (ERNFGGYRSAVTDYVLCLLNSTDNGIECHTSGPSYN). A glycan (N-linked (GlcNAc...) asparagine) is linked at N486. The helical transmembrane segment at 503 to 523 (PYFMFYFFMRFFGILFFLIYG) threads the bilayer. The Cytoplasmic portion of the chain corresponds to 524-574 (TSKNARDSWYELFIKIKVSLSETSSTISNNSGGGSSQQKQQQQNEIKLEKI). Over residues 550 to 568 (ISNNSGGGSSQQKQQQQNE) the composition is skewed to low complexity. The disordered stretch occupies residues 550–574 (ISNNSGGGSSQQKQQQQNEIKLEKI).

It belongs to the G-protein coupled receptor Fz/Smo family.

The protein resides in the membrane. The protein is Frizzled and smoothened-like protein G (fslG) of Dictyostelium discoideum (Social amoeba).